Reading from the N-terminus, the 445-residue chain is Tubulin beta-3 chain (445 aa).

Residues Gln-11, Glu-69, Ser-138, Gly-142, Thr-143, Gly-144, Asn-204, and Asn-226 each contribute to the GTP site. Glu-69 is a Mg(2+) binding site. Positions 425 to 445 are disordered; the sequence is YQDATAEEYDEEEQDGEEEHD. A compositionally biased stretch (acidic residues) spans 429–445; that stretch reads TAEEYDEEEQDGEEEHD.

This sequence belongs to the tubulin family. As to quaternary structure, dimer of alpha and beta chains. A typical microtubule is a hollow water-filled tube with an outer diameter of 25 nm and an inner diameter of 15 nM. Alpha-beta heterodimers associate head-to-tail to form protofilaments running lengthwise along the microtubule wall with the beta-tubulin subunit facing the microtubule plus end conferring a structural polarity. Microtubules usually have 13 protofilaments but different protofilament numbers can be found in some organisms and specialized cells. Mg(2+) is required as a cofactor.

It is found in the cytoplasm. It localises to the cytoskeleton. Tubulin is the major constituent of microtubules, a cylinder consisting of laterally associated linear protofilaments composed of alpha- and beta-tubulin heterodimers. Microtubules grow by the addition of GTP-tubulin dimers to the microtubule end, where a stabilizing cap forms. Below the cap, tubulin dimers are in GDP-bound state, owing to GTPase activity of alpha-tubulin. This Zea mays (Maize) protein is Tubulin beta-3 chain (TUBB3).